The sequence spans 556 residues: Dihydroxy-acid dehydratase (556 aa).

Residue cysteine 47 coordinates [2Fe-2S] cluster. A Mg(2+)-binding site is contributed by aspartate 79. A [2Fe-2S] cluster-binding site is contributed by cysteine 120. Mg(2+) contacts are provided by aspartate 121 and lysine 122. Position 122 is an N6-carboxylysine (lysine 122). Cysteine 192 is a binding site for [2Fe-2S] cluster. Mg(2+) is bound at residue glutamate 444. Catalysis depends on serine 470, which acts as the Proton acceptor.

It belongs to the IlvD/Edd family. As to quaternary structure, homodimer. [2Fe-2S] cluster is required as a cofactor. Mg(2+) serves as cofactor.

The enzyme catalyses (2R)-2,3-dihydroxy-3-methylbutanoate = 3-methyl-2-oxobutanoate + H2O. It catalyses the reaction (2R,3R)-2,3-dihydroxy-3-methylpentanoate = (S)-3-methyl-2-oxopentanoate + H2O. The protein operates within amino-acid biosynthesis; L-isoleucine biosynthesis; L-isoleucine from 2-oxobutanoate: step 3/4. It participates in amino-acid biosynthesis; L-valine biosynthesis; L-valine from pyruvate: step 3/4. In terms of biological role, functions in the biosynthesis of branched-chain amino acids. Catalyzes the dehydration of (2R,3R)-2,3-dihydroxy-3-methylpentanoate (2,3-dihydroxy-3-methylvalerate) into 2-oxo-3-methylpentanoate (2-oxo-3-methylvalerate) and of (2R)-2,3-dihydroxy-3-methylbutanoate (2,3-dihydroxyisovalerate) into 2-oxo-3-methylbutanoate (2-oxoisovalerate), the penultimate precursor to L-isoleucine and L-valine, respectively. The sequence is that of Dihydroxy-acid dehydratase from Prochlorococcus marinus (strain MIT 9313).